The following is a 144-amino-acid chain: Maximins 3/H5 (144 aa).

Residues 1–18 form the signal peptide; it reads MNFKYIFAVSFLIASAYA. 2 consecutive propeptides follow at residues 19–43 and 74–123; these read RSVQNDEQSLSQRDVLEEESLREIR and TAEE…KEKR. Position 143 is a leucine amide (leucine 143).

Belongs to the bombinin family. As to expression, expressed by the skin glands.

The protein localises to the secreted. In terms of biological role, maximin-3 shows antibacterial activity against both Gram-positive and Gram-negative bacteria. It also shows antimicrobial activity against the fungus C.albicans, but not against A.flavus nor P.uticale. It has little hemolytic activity. It possess a significant cytotoxicity against tumor cell lines. It possess a significant anti-HIV activity. It shows high spermicidal activity. Its function is as follows. Maximin-H5 shows antibacterial activity only against the Gram-positive bacteria S.aureus. The other bacterial and fungal strains tested were resistant to it. The presence of metal ions, like Zn(2+) and Mg(2+), did not increase its antimicrobial potency. Does not show hemolytic activity (in a concentration up to 80 uM). The sequence is that of Maximins 3/H5 from Bombina maxima (Giant fire-bellied toad).